The sequence spans 814 residues: ATP-dependent 6-phosphofructokinase 1 (814 aa).

The interval 1–420 is N-terminal catalytic PFK domain 1; it reads MDADASTITP…NLETYKLLTK (420 aa). Residues Gly55, 118 to 119, and 148 to 151 contribute to the ATP site; these read RS and GDGS. Asp149 contributes to the Mg(2+) binding site. Residues 194–196, Arg231, 238–240, Glu294, Arg322, and 328–331 each bind substrate; these read SID, MGR, and HVQR. Asp196 (proton acceptor) is an active-site residue. Residues 421 to 435 are interdomain linker; it reads MRTVEKDNLSEGHKF. The C-terminal regulatory PFK domain 2 stretch occupies residues 436–814; sequence NVAVINVGAP…EEESADSHMF (379 aa). Beta-D-fructose 2,6-bisphosphate contacts are provided by residues Lys505, 563–567, Arg601, 608–610, Glu664, Arg690, 696–699, and Arg771; these read TISNN, MGG, and HVQQ.

The protein belongs to the phosphofructokinase type A (PFKA) family. ATP-dependent PFK group I subfamily. Eukaryotic two domain clade 'E' sub-subfamily. As to quaternary structure, homotetramer. Mg(2+) serves as cofactor.

The protein resides in the cytoplasm. It carries out the reaction beta-D-fructose 6-phosphate + ATP = beta-D-fructose 1,6-bisphosphate + ADP + H(+). The protein operates within carbohydrate degradation; glycolysis; D-glyceraldehyde 3-phosphate and glycerone phosphate from D-glucose: step 3/4. Its activity is regulated as follows. Allosterically activated by ADP, AMP, or fructose 2,6-bisphosphate, and allosterically inhibited by ATP or citrate. Catalyzes the phosphorylation of D-fructose 6-phosphate to fructose 1,6-bisphosphate by ATP, the first committing step of glycolysis. This chain is ATP-dependent 6-phosphofructokinase 1, found in Caenorhabditis elegans.